Reading from the N-terminus, the 205-residue chain is Pyrrolidone-carboxylate peptidase (205 aa).

Catalysis depends on residues glutamate 78, cysteine 141, and histidine 165.

It belongs to the peptidase C15 family. In terms of assembly, homotetramer.

The protein resides in the cytoplasm. It carries out the reaction Release of an N-terminal pyroglutamyl group from a polypeptide, the second amino acid generally not being Pro.. Functionally, removes 5-oxoproline from various penultimate amino acid residues except L-proline. This is Pyrrolidone-carboxylate peptidase from Thermosipho africanus (strain TCF52B).